The following is a 151-amino-acid chain: UPF0178 protein CPS_3584 (151 aa).

Belongs to the UPF0178 family.

This Colwellia psychrerythraea (strain 34H / ATCC BAA-681) (Vibrio psychroerythus) protein is UPF0178 protein CPS_3584.